The primary structure comprises 604 residues: Prostaglandin G/H synthase 2 (604 aa).

The signal sequence occupies residues 1–17 (MLARALLLCVALALGHA). The 38-residue stretch at 18-55 (ANPCCSNPCQNRGVCMSVGFDQYQCDCTRTGFYGENCS) folds into the EGF-like domain. 4 disulfide bridges follow: Cys21–Cys32, Cys22–Cys145, Cys26–Cys42, and Cys44–Cys54. The N-linked (GlcNAc...) asparagine glycan is linked to Asn53. Arg106 serves as a coordination point for substrate. A glycan (N-linked (GlcNAc...) asparagine) is linked at Asn130. Catalysis depends on His193, which acts as the Proton acceptor. Tyr341 lines the substrate pocket. Residue Tyr371 is the For cyclooxygenase activity of the active site. Residue His374 coordinates heme b. Residue Asn396 is glycosylated (N-linked (GlcNAc...) asparagine). At Cys526 the chain carries S-nitrosocysteine. An intrachain disulfide couples Cys555 to Cys561. Asn580 carries N-linked (GlcNAc...) asparagine glycosylation.

This sequence belongs to the prostaglandin G/H synthase family. As to quaternary structure, homodimer. Heme b serves as cofactor. Post-translationally, S-nitrosylation by NOS2 (iNOS) activates enzyme activity. S-nitrosylation may take place on different Cys residues in addition to Cys-526.

It localises to the microsome membrane. The protein resides in the endoplasmic reticulum membrane. Its subcellular location is the nucleus inner membrane. The protein localises to the nucleus outer membrane. The enzyme catalyses (5Z,8Z,11Z,14Z)-eicosatetraenoate + AH2 + 2 O2 = prostaglandin H2 + A + H2O. It catalyses the reaction (5Z,8Z,11Z,14Z)-eicosatetraenoate + 2 O2 = prostaglandin G2. It carries out the reaction prostaglandin G2 + AH2 = prostaglandin H2 + A + H2O. The catalysed reaction is (5Z,8Z,11Z,14Z,17Z)-eicosapentaenoate + 2 O2 = prostaglandin G3. The enzyme catalyses prostaglandin G3 + AH2 = prostaglandin H3 + A + H2O. It catalyses the reaction (8Z,11Z,14Z)-eicosatrienoate + 2 O2 = prostaglandin G1. It carries out the reaction prostaglandin G1 + AH2 = prostaglandin H1 + A + H2O. The catalysed reaction is 2-(5Z,8Z,11Z,14Z)-eicosatetraenoyl-sn-glycero-3-phosphoethanolamine + 2 O2 = 2-(prostaglandin G2)-sn-glycero-3-phosphoethanolamine. The enzyme catalyses 2-(prostaglandin G2)-sn-glycero-3-phosphoethanolamine + AH2 = 2-(prostaglandin H2)-sn-glycero-3-phosphoethanolamine + A + H2O. It catalyses the reaction 2-(5Z,8Z,11Z,14Z)-eicosatetraenoyl-sn-glycero-3-phosphocholine + 2 O2 = 2-(prostaglandin G2)-sn-glycero-3-phosphocholine. It carries out the reaction 2-(prostaglandin G2)-sn-glycero-3-phosphocholine + AH2 = 2-(prostaglandin H2)-sn-glycero-3-phosphocholine + A + H2O. The catalysed reaction is (15S)-hydroperoxy-(5Z,8Z,11Z,13E)-eicosatetraenoate + AH2 = (15S)-hydroxy-(5Z,8Z,11Z,13E)-eicosatetraenoate + A + H2O. The enzyme catalyses 2-(5Z,8Z,11Z,14Z)-eicosatetraenoyl-sn-glycero-3-phosphocholine + AH2 + O2 = 2-[(15S)-hydroxy-(5Z,8Z,11Z,13E)-eicosatetraenoyl]-sn-glycero-3-phosphocholine + A + H2O. It catalyses the reaction 2-(5Z,8Z,11Z,14Z)-eicosatetraenoyl-sn-glycero-3-phosphocholine + AH2 + O2 = 2-[(15R)-hydroxy-(5Z,8Z,11Z,13E)-eicosatetraenoyl]-sn-glycero-3-phosphocholine + A + H2O. It carries out the reaction 2-(5Z,8Z,11Z,14Z)-eicosatetraenoyl-sn-glycero-3-phosphocholine + AH2 + O2 = 2-[(11R)-hydroxy-(5Z,8Z,12E,14Z)-eicosatetraenoyl]-sn-glycero-3-phosphocholine + A + H2O. The catalysed reaction is (9Z,12Z)-octadecadienoate + AH2 + O2 = 9-hydroxy-(10E,12Z)-octadecadienoate + A + H2O. The enzyme catalyses (9Z,12Z)-octadecadienoate + AH2 + O2 = 13-hydroxy-(9Z,11E)-octadecadienoate + A + H2O. It catalyses the reaction (5Z,8Z,11Z,14Z)-eicosatetraenoate + AH2 + O2 = (15R)-hydroxy-(5Z,8Z,11Z,13E)-eicosatetraenoate + A + H2O. It carries out the reaction (5Z,8Z,11Z,14Z)-eicosatetraenoate + AH2 + O2 = (11R)-hydroxy-(5Z,8Z,12E,14Z)-eicosatetraenoate + A + H2O. The catalysed reaction is (5Z,8Z,11Z,14Z,17Z)-eicosapentaenoate + AH2 + O2 = (11R)-hydroxy-(5Z,8Z,12E,14Z,17Z)-eicosapentaenoate + A + H2O. The enzyme catalyses (5Z,8Z,11Z,14Z,17Z)-eicosapentaenoate + AH2 + O2 = (18S)-hydroxy-(5Z,8Z,11Z,14Z,16E)-eicosapentaenoate + A + H2O. It catalyses the reaction (5Z,8Z,11Z,14Z,17Z)-eicosapentaenoate + AH2 + O2 = (18R)-hydroxy-(5Z,8Z,11Z,14Z,16E)-eicosapentaenoate + A + H2O. It carries out the reaction (5Z,8Z,11Z,14Z,17Z)-eicosapentaenoate + AH2 + O2 = (15R)-hydroxy-(5Z,8Z,11Z,13E,17Z)-eicosapentaenoate + A + H2O. The catalysed reaction is (5Z,8Z,11Z,14Z,17Z)-eicosapentaenoate + AH2 + O2 = (15S)-hydroxy-(5Z,8Z,11Z,13E,17Z)-eicosapentaenoate + A + H2O. The enzyme catalyses (7Z,10Z,13Z,16Z,19Z)-docosapentaenoate + AH2 + O2 = 13R-hydroxy-(7Z,10Z,14E,16Z,19Z)-docosapentaenoate + A + H2O. It catalyses the reaction (4Z,7Z,10Z,13Z,16Z,19Z)-docosahexaenoate + AH2 + O2 = 13-hydroxy-(4Z,7Z,10Z,14E,16Z,19Z)-docosahexaenoate + A + H2O. It carries out the reaction (5S)-hydroxy-(6E,8Z,11Z,14Z)-eicosatetraenoate + AH2 + O2 = (5S,15R)-dihydroxy-(6E,8Z,11Z,13E)-eicosatetraenoate + A + H2O. The catalysed reaction is (4Z,7Z,10Z,13Z,16Z,19Z)-docosahexaenoate + AH2 + O2 = 17R-hydroxy-(4Z,7Z,10Z,13Z,15E,19Z)-docosahexaenoate + A + H2O. The enzyme catalyses (5S)-hydroxy-(6E,8Z,11Z,14Z)-eicosatetraenoate + AH2 + O2 = (5S,15S)-dihydroxy-(6E,8Z,11Z,13E)-eicosatetraenoate + A + H2O. It catalyses the reaction (5S)-hydroxy-(6E,8Z,11Z,14Z)-eicosatetraenoate + AH2 + O2 = (5S,11R)-dihydroxy-(6E,8Z,12E,14Z)-eicosatetraenoate + A + H2O. It carries out the reaction 2-(5Z,8Z,11Z,14Z-eicosatetraenoyl)-glycerol + 2 O2 = 2-glyceryl-prostaglandin G2. The catalysed reaction is 2-glyceryl-prostaglandin G2 + AH2 = 2-glyceryl-prostaglandin H2 + A + H2O. The enzyme catalyses (5Z,8Z,11Z,14Z)-eicosatetraenoate + O2 = (15R)-hydroperoxy-(5Z,8Z,11Z,13E)-eicosatetraenoate. It catalyses the reaction (5Z,8Z,11Z,14Z)-eicosatetraenoate + O2 = 11R-hydroperoxy-(5Z,8Z,12E,14Z)-eicosatetraenoate. It carries out the reaction (9Z,12Z)-octadecadienoate + AH2 + O2 = (9R)-hydroxy-(10E,12Z)-octadecadienoate + A + H2O. The catalysed reaction is (9Z,12Z)-octadecadienoate + AH2 + O2 = (9S)-hydroxy-(10E,12Z)-octadecadienoate + A + H2O. The enzyme catalyses (9Z,12Z)-octadecadienoate + AH2 + O2 = (13S)-hydroxy-(9Z,11E)-octadecadienoate + A + H2O. It catalyses the reaction (9Z,12Z)-octadecadienoate + AH2 + O2 = (13R)-hydroxy-(9Z,11E)-octadecadienoate + A + H2O. It participates in lipid metabolism; prostaglandin biosynthesis. Dual cyclooxygenase and peroxidase in the biosynthesis pathway of prostanoids, a class of C20 oxylipins mainly derived from arachidonate ((5Z,8Z,11Z,14Z)-eicosatetraenoate, AA, C20:4(n-6)), with a particular role in the inflammatory response. The cyclooxygenase activity oxygenates AA to the hydroperoxy endoperoxide prostaglandin G2 (PGG2), and the peroxidase activity reduces PGG2 to the hydroxy endoperoxide prostaglandin H2 (PGH2), the precursor of all 2-series prostaglandins and thromboxanes. This complex transformation is initiated by abstraction of hydrogen at carbon 13 (with S-stereochemistry), followed by insertion of molecular O2 to form the endoperoxide bridge between carbon 9 and 11 that defines prostaglandins. The insertion of a second molecule of O2 (bis-oxygenase activity) yields a hydroperoxy group in PGG2 that is then reduced to PGH2 by two electrons. Similarly catalyzes successive cyclooxygenation and peroxidation of dihomo-gamma-linoleate (DGLA, C20:3(n-6)) and eicosapentaenoate (EPA, C20:5(n-3)) to corresponding PGH1 and PGH3, the precursors of 1- and 3-series prostaglandins. In an alternative pathway of prostanoid biosynthesis, converts 2-arachidonoyl lysophopholipids to prostanoid lysophopholipids, which are then hydrolyzed by intracellular phospholipases to release free prostanoids. Metabolizes 2-arachidonoyl glycerol yielding the glyceryl ester of PGH2, a process that can contribute to pain response. Generates lipid mediators from n-3 and n-6 polyunsaturated fatty acids (PUFAs) via a lipoxygenase-type mechanism. Oxygenates PUFAs to hydroperoxy compounds and then reduces them to corresponding alcohols. Plays a role in the generation of resolution phase interaction products (resolvins) during both sterile and infectious inflammation. Metabolizes docosahexaenoate (DHA, C22:6(n-3)) to 17R-HDHA, a precursor of the D-series resolvins (RvDs). As a component of the biosynthetic pathway of E-series resolvins (RvEs), converts eicosapentaenoate (EPA, C20:5(n-3)) primarily to 18S-HEPE that is further metabolized by ALOX5 and LTA4H to generate 18S-RvE1 and 18S-RvE2. In vascular endothelial cells, converts docosapentaenoate (DPA, C22:5(n-3)) to 13R-HDPA, a precursor for 13-series resolvins (RvTs) shown to activate macrophage phagocytosis during bacterial infection. In activated leukocytes, contributes to oxygenation of hydroxyeicosatetraenoates (HETE) to diHETES (5,15-diHETE and 5,11-diHETE). Can also use linoleate (LA, (9Z,12Z)-octadecadienoate, C18:2(n-6)) as substrate and produce hydroxyoctadecadienoates (HODEs) in a regio- and stereospecific manner, being (9R)-HODE ((9R)-hydroxy-(10E,12Z)-octadecadienoate) and (13S)-HODE ((13S)-hydroxy-(9Z,11E)-octadecadienoate) its major products. During neuroinflammation, plays a role in neuronal secretion of specialized preresolving mediators (SPMs) 15R-lipoxin A4 that regulates phagocytic microglia. The chain is Prostaglandin G/H synthase 2 (PTGS2) from Equus caballus (Horse).